Reading from the N-terminus, the 66-residue chain is MAKGKDVRIRVILQCVSCVRKGANEESAGISRYSTQKNRHNTPGQLELRKFCRYCRKHTIHAEIKK.

This sequence belongs to the bacterial ribosomal protein bL33 family.

It is found in the plastid. The protein localises to the chloroplast. This chain is Large ribosomal subunit protein bL33c, found in Oryza nivara (Indian wild rice).